A 365-amino-acid polypeptide reads, in one-letter code: tRNA-specific 2-thiouridylase MnmA (365 aa).

Residues 6 to 13 (GMSGGVDS) and methionine 32 contribute to the ATP site. The segment at 92-94 (NPD) is interaction with target base in tRNA. Residue cysteine 97 is the Nucleophile of the active site. A disulfide bridge connects residues cysteine 97 and cysteine 197. Glycine 121 is a binding site for ATP. The interaction with tRNA stretch occupies residues 147 to 149 (KDQ). Cysteine 197 (cysteine persulfide intermediate) is an active-site residue. Residues 315-316 (RY) are interaction with tRNA.

This sequence belongs to the MnmA/TRMU family.

It is found in the cytoplasm. The enzyme catalyses S-sulfanyl-L-cysteinyl-[protein] + uridine(34) in tRNA + AH2 + ATP = 2-thiouridine(34) in tRNA + L-cysteinyl-[protein] + A + AMP + diphosphate + H(+). Its function is as follows. Catalyzes the 2-thiolation of uridine at the wobble position (U34) of tRNA, leading to the formation of s(2)U34. The sequence is that of tRNA-specific 2-thiouridylase MnmA from Azoarcus sp. (strain BH72).